The chain runs to 1872 residues: E3 ubiquitin-protein ligase UBR2 (1872 aa).

Residues 96 to 172 form a UBR-type zinc finger; the sequence is TACTRLCFPS…DAFKCKNELN (77 aa). Residue Lys-709 forms a Glycyl lysine isopeptide (Lys-Gly) (interchain with G-Cter in ubiquitin) linkage. Positions 1134–1240 are interaction with UBC2; the sequence is RYLMETAPHV…SSNTINSCCD (107 aa). Residues 1203–1227 form a disordered region; the sequence is NNSVDTSDISTPRTTSPSLSPTRIN. Residues 1212 to 1225 are compositionally biased toward low complexity; the sequence is STPRTTSPSLSPTR. Ser-1218 and Ser-1222 each carry phosphoserine. Residues 1241 to 1362 form an RING-type; atypical zinc finger; it reads DDCVFCKMPK…GLIYCPVCNS (122 aa).

Belongs to the E3 ubiquitin-protein ligase UBR1-like family. Interacts with MUB1, RPN4 and UBC2.

The protein localises to the cytoplasm. It carries out the reaction S-ubiquitinyl-[E2 ubiquitin-conjugating enzyme]-L-cysteine + [acceptor protein]-L-lysine = [E2 ubiquitin-conjugating enzyme]-L-cysteine + N(6)-ubiquitinyl-[acceptor protein]-L-lysine.. Its pathway is protein modification; protein ubiquitination. In terms of biological role, E3 ubiquitin-protein ligase which probably functions outside the N-end rule pathway, since it lacks the residues essential for the degradation of N-end rule substrates. Mediates RPN4 ubiquitination and subsequent degradation. This is E3 ubiquitin-protein ligase UBR2 (UBR2) from Saccharomyces cerevisiae (strain ATCC 204508 / S288c) (Baker's yeast).